Consider the following 260-residue polypeptide: MELDDASRHGFGRMGFGCKHYRRRCRIRAPCCNDVFHCRHCHNESTKDGHELDRHAVESVICLVCDTEQPVAQVCYNCGVCMGEYFCSACKFFDDDVDREHFHCQDCGICRVGGKDNFFHCEKCGSCYSVSLRDKHCCIENSMKNNCPICYEYLFDSLRETSVLRCGHTMHLQCFHEMLKHDKFSCPICSMPIFDMDKFLRALDAEIEANMLHIDYMGKGWIVCNDCRDTTQVYARVAGHKCCHCQSHNTCRVAAPVLPA.

Residues 11–80 (FGRMGFGCKH…VAQVCYNCGV (70 aa)) form a CHY-type zinc finger. The Zn(2+) site is built by Cys-18, His-20, Cys-31, Cys-32, Cys-38, Cys-41, His-42, His-50, Cys-62, Cys-65, Cys-75, Cys-78, Cys-87, Cys-90, His-103, Cys-104, Cys-107, Cys-110, His-120, Cys-121, Cys-124, Cys-127, His-136, and Cys-138. The CTCHY-type zinc-finger motif lies at 82–146 (MGEYFCSACK…CCIENSMKNN (65 aa)). The RING-type; atypical zinc finger occupies 147–190 (CPICYEYLFDSLRETSVLRCGHTMHLQCFHEMLKHDKFSCPICS).

In terms of tissue distribution, expressed in roots, leaves, nodes and panicles.

Its subcellular location is the nucleus. The protein resides in the cytoplasm. It catalyses the reaction S-ubiquitinyl-[E2 ubiquitin-conjugating enzyme]-L-cysteine + [acceptor protein]-L-lysine = [E2 ubiquitin-conjugating enzyme]-L-cysteine + N(6)-ubiquitinyl-[acceptor protein]-L-lysine.. It functions in the pathway protein modification; protein ubiquitination. In terms of biological role, possesses E3 ubiquitin-protein ligase activity in vitro. Possesses transactivation activity in yeast cells. May modulate abiotic stress responses by negatively regulating antioxidant enzymes-mediated reactive oxygen species (ROS) removal. This chain is E3 ubiquitin-protein ligase SRFP1, found in Oryza sativa subsp. japonica (Rice).